Here is an 81-residue protein sequence, read N- to C-terminus: Large ribosomal subunit protein bL31B (81 aa).

It belongs to the bacterial ribosomal protein bL31 family. Type B subfamily. Part of the 50S ribosomal subunit.

The chain is Large ribosomal subunit protein bL31B from Pediococcus pentosaceus (strain ATCC 25745 / CCUG 21536 / LMG 10740 / 183-1w).